The chain runs to 161 residues: Protein-export protein SecB (161 aa).

The disordered stretch occupies residues 141–161; it reads KKQQETAGEQPDQPADTITRH.

Belongs to the SecB family. As to quaternary structure, homotetramer, a dimer of dimers. One homotetramer interacts with 1 SecA dimer.

It localises to the cytoplasm. In terms of biological role, one of the proteins required for the normal export of preproteins out of the cell cytoplasm. It is a molecular chaperone that binds to a subset of precursor proteins, maintaining them in a translocation-competent state. It also specifically binds to its receptor SecA. The polypeptide is Protein-export protein SecB (Nitrosomonas europaea (strain ATCC 19718 / CIP 103999 / KCTC 2705 / NBRC 14298)).